The chain runs to 237 residues: Phosphoribosylaminoimidazole-succinocarboxamide synthase (237 aa).

This sequence belongs to the SAICAR synthetase family.

The catalysed reaction is 5-amino-1-(5-phospho-D-ribosyl)imidazole-4-carboxylate + L-aspartate + ATP = (2S)-2-[5-amino-1-(5-phospho-beta-D-ribosyl)imidazole-4-carboxamido]succinate + ADP + phosphate + 2 H(+). The protein operates within purine metabolism; IMP biosynthesis via de novo pathway; 5-amino-1-(5-phospho-D-ribosyl)imidazole-4-carboxamide from 5-amino-1-(5-phospho-D-ribosyl)imidazole-4-carboxylate: step 1/2. This Cronobacter sakazakii (strain ATCC BAA-894) (Enterobacter sakazakii) protein is Phosphoribosylaminoimidazole-succinocarboxamide synthase.